Reading from the N-terminus, the 183-residue chain is MSDWQTVRTWLAGTYSNRAQAMAEPVWFIPVTLWYVEVAGLFGEGAGFFTEQVSEHTPNQPYRSRVLQLLDNPLRLENYRLKDQKVWAGAAKDPERLGRLRADDCEQLPGCTLYLERRGETFTGKMQPGGGCRLFPGDASYVEIEFELGERLFFTLDRGFEATTGEQTWGSRAGAYRYLKQLH.

It belongs to the CpcT/CpeT biliprotein lyase family.

In terms of biological role, covalently attaches a chromophore to Cys residue(s) of phycobiliproteins. The sequence is that of Chromophore lyase CpcT/CpeT 4 from Gloeobacter violaceus (strain ATCC 29082 / PCC 7421).